A 456-amino-acid chain; its full sequence is Putative F-box/LRR-repeat protein At3g18150 (456 aa).

Residues 30–78 (VDSISSLPDVILQHILSFIPTKLAITTSLLSKRWRHVWCDTPSLSFNDY) enclose the F-box domain. LRR repeat units follow at residues 177-202 (TCLL…TLDH), 203-213 (CGGLRVLDLSK), 228-253 (VPEL…KLPC), 278-303 (KADF…TLGG), 333-358 (IFQY…TLLT), and 396-422 (CLDV…DKMV).

In Arabidopsis thaliana (Mouse-ear cress), this protein is Putative F-box/LRR-repeat protein At3g18150.